The following is a 524-amino-acid chain: Phosphoenolpyruvate carboxykinase (ATP) (524 aa).

3 residues coordinate substrate: R52, Y188, and K194. ATP contacts are provided by residues K194, H213, and 229–237; that span reads GLSGTGKTT. The Mn(2+) site is built by K194 and H213. D250 is a Mn(2+) binding site. 3 residues coordinate ATP: E278, R314, and T439. Substrate is bound at residue R314.

It belongs to the phosphoenolpyruvate carboxykinase (ATP) family. Mn(2+) serves as cofactor.

It localises to the cytoplasm. The catalysed reaction is oxaloacetate + ATP = phosphoenolpyruvate + ADP + CO2. Its pathway is carbohydrate biosynthesis; gluconeogenesis. In terms of biological role, involved in the gluconeogenesis. Catalyzes the conversion of oxaloacetate (OAA) to phosphoenolpyruvate (PEP) through direct phosphoryl transfer between the nucleoside triphosphate and OAA. This is Phosphoenolpyruvate carboxykinase (ATP) from Campylobacter jejuni subsp. jejuni serotype O:23/36 (strain 81-176).